Reading from the N-terminus, the 955-residue chain is Leucine--tRNA ligase (955 aa).

The 'HIGH' region signature appears at 51-61 (PYLNGVLHAGH). Positions 647–651 (KLSKS) match the 'KMSKS' region motif. Residue Lys650 coordinates ATP.

Belongs to the class-I aminoacyl-tRNA synthetase family.

It is found in the cytoplasm. It carries out the reaction tRNA(Leu) + L-leucine + ATP = L-leucyl-tRNA(Leu) + AMP + diphosphate. In Methanococcus maripaludis (strain C5 / ATCC BAA-1333), this protein is Leucine--tRNA ligase.